A 290-amino-acid polypeptide reads, in one-letter code: Ribosomal RNA small subunit methyltransferase A (290 aa).

Residues Asn-27, Leu-29, Gly-54, Glu-75, Asp-100, and Asn-125 each coordinate S-adenosyl-L-methionine.

The protein belongs to the class I-like SAM-binding methyltransferase superfamily. rRNA adenine N(6)-methyltransferase family. RsmA subfamily.

It localises to the cytoplasm. The catalysed reaction is adenosine(1518)/adenosine(1519) in 16S rRNA + 4 S-adenosyl-L-methionine = N(6)-dimethyladenosine(1518)/N(6)-dimethyladenosine(1519) in 16S rRNA + 4 S-adenosyl-L-homocysteine + 4 H(+). Specifically dimethylates two adjacent adenosines (A1518 and A1519) in the loop of a conserved hairpin near the 3'-end of 16S rRNA in the 30S particle. May play a critical role in biogenesis of 30S subunits. This Streptococcus pneumoniae (strain 70585) protein is Ribosomal RNA small subunit methyltransferase A.